The primary structure comprises 505 residues: Maturase K (505 aa).

This sequence belongs to the intron maturase 2 family. MatK subfamily.

It localises to the plastid. The protein resides in the chloroplast. In terms of biological role, usually encoded in the trnK tRNA gene intron. Probably assists in splicing its own and other chloroplast group II introns. This is Maturase K from Kunzea capitata (Pink kunzea).